We begin with the raw amino-acid sequence, 169 residues long: Endoribonuclease YbeY (169 aa).

Zn(2+)-binding residues include histidine 130, histidine 134, and histidine 140.

This sequence belongs to the endoribonuclease YbeY family. Requires Zn(2+) as cofactor.

The protein localises to the cytoplasm. Its function is as follows. Single strand-specific metallo-endoribonuclease involved in late-stage 70S ribosome quality control and in maturation of the 3' terminus of the 16S rRNA. In Neisseria meningitidis serogroup B (strain ATCC BAA-335 / MC58), this protein is Endoribonuclease YbeY.